Here is a 254-residue protein sequence, read N- to C-terminus: Thiazole synthase (254 aa).

The Schiff-base intermediate with DXP role is filled by K95. 1-deoxy-D-xylulose 5-phosphate contacts are provided by residues G156, 182–183 (AG), and 204–205 (NT).

This sequence belongs to the ThiG family. In terms of assembly, homotetramer. Forms heterodimers with either ThiH or ThiS.

It is found in the cytoplasm. It carries out the reaction [ThiS sulfur-carrier protein]-C-terminal-Gly-aminoethanethioate + 2-iminoacetate + 1-deoxy-D-xylulose 5-phosphate = [ThiS sulfur-carrier protein]-C-terminal Gly-Gly + 2-[(2R,5Z)-2-carboxy-4-methylthiazol-5(2H)-ylidene]ethyl phosphate + 2 H2O + H(+). It participates in cofactor biosynthesis; thiamine diphosphate biosynthesis. In terms of biological role, catalyzes the rearrangement of 1-deoxy-D-xylulose 5-phosphate (DXP) to produce the thiazole phosphate moiety of thiamine. Sulfur is provided by the thiocarboxylate moiety of the carrier protein ThiS. In vitro, sulfur can be provided by H(2)S. The polypeptide is Thiazole synthase (Shewanella sediminis (strain HAW-EB3)).